The sequence spans 95 residues: Large ribosomal subunit protein uL23 (95 aa).

The protein belongs to the universal ribosomal protein uL23 family. In terms of assembly, part of the 50S ribosomal subunit. Contacts protein L29, and trigger factor when it is bound to the ribosome.

In terms of biological role, one of the early assembly proteins it binds 23S rRNA. One of the proteins that surrounds the polypeptide exit tunnel on the outside of the ribosome. Forms the main docking site for trigger factor binding to the ribosome. The chain is Large ribosomal subunit protein uL23 from Desulfotalea psychrophila (strain LSv54 / DSM 12343).